A 416-amino-acid chain; its full sequence is E3 ubiquitin-protein ligase DMA1 (416 aa).

The interval 1–30 (MSTNTVPSSPPNQTPPAASGIATSHDHTKF) is disordered. Residues Lys-150, Lys-204, Lys-217, Lys-237, Lys-240, Lys-260, Lys-300, Lys-306, Lys-313, and Lys-317 each participate in a glycyl lysine isopeptide (Lys-Gly) (interchain with G-Cter in ubiquitin) cross-link. Positions 189 to 252 (IIIGRYTERV…SGTFLNHQRL (64 aa)) constitute an FHA domain. The RING-type zinc finger occupies 327 to 371 (CSICLNKIKPCQAIFISPCAHSWHFHCVRRLVIMNYPQFMCPNCR).

It belongs to the DMA1 family. Interacts with CDC123. Interacts with PCL1. UBC4-dependent autoubiquitination occurs at Lys-150, Lys-204, Lys-217, Lys-237, Lys-240, Lys-260, Lys-300, Lys-306, Lys-313 and Lys-317. UBC4-dependent autoubiquitination is responsible for DMA2 turnover. UBC13/MMS2-dependent autoubiquitination occurs at Lys-237 and Lys-306. Lys-204 and Lys-306 are also ubiquitinated in trans by DMA2 E3 ligase in association with UBC4.

The protein resides in the cytoplasm. The catalysed reaction is S-ubiquitinyl-[E2 ubiquitin-conjugating enzyme]-L-cysteine + [acceptor protein]-L-lysine = [E2 ubiquitin-conjugating enzyme]-L-cysteine + N(6)-ubiquitinyl-[acceptor protein]-L-lysine.. Its function is as follows. E3 ubiquitin-protein ligase which functions in cell cycle retarding in conjunction with the UBC4 and UBC13/MMS2 complex, 2 E2 ubiquitin conjugating enzymes. Involved in nutritional control of the cell cycle. Targets the G1 cyclin PCL1 for destruction. Required for proper spindle positioning, likely regulating septin ring deposition at the bud neck. This Saccharomyces cerevisiae (strain ATCC 204508 / S288c) (Baker's yeast) protein is E3 ubiquitin-protein ligase DMA1.